A 939-amino-acid polypeptide reads, in one-letter code: Probable importin ECU10_0620 (939 aa).

An Importin N-terminal domain is found at 23 to 90 (AEAMLMDLEK…VENILDLFLY (68 aa)).

Belongs to the importin beta family.

The protein resides in the nucleus. It localises to the cytoplasm. In terms of biological role, active in protein import into the nucleus. This Encephalitozoon cuniculi (strain GB-M1) (Microsporidian parasite) protein is Probable importin ECU10_0620.